The following is a 99-amino-acid chain: Protein Frey (99 aa).

A helical transmembrane segment spans residues 10–29 (YPRAGLSLFLFYLILAGALL). Residues 60-90 (DYGLRPKHPRPGGPRPLLSQAQQRKRDGPNM) are disordered.

As to quaternary structure, interacts with SPPL2C (via active sites); the interaction stabilizes FREY1 protein and inhibits SPPL2C proteolytic activity. Interacts with IZUMO1; the interaction retains IZUMO1 at the endoplasmic reticulum membrane and coordinates IZUMO1 complex assembly. As to expression, expressed in round spermatids (at protein level).

It localises to the endoplasmic reticulum membrane. Key regulator for male fertility expressed transiently in round spermatids where it recruits IZUMO1 at the endoplasmic reticulum (ER) membrane and coordinates the oolemmal binding multimeric complex (IZUMO1 complex) assembly. Upon complete assembly of the IZUMO1 complex, its ER retention is released, facilitating IZUMO1 complex export to the acrosome. Through the interaction with SPPL2C, inhibits its intramembrane protease activity directly accessing the catalytic center of an I-CLiP. The sequence is that of Protein Frey from Mus musculus (Mouse).